We begin with the raw amino-acid sequence, 247 residues long: Adiponectin (247 aa).

An N-terminal signal peptide occupies residues 1 to 17 (MLLLQALLFLLILPSHA). O-linked (GalNAc...) threonine glycosylation is found at Thr23 and Thr24. A 5-hydroxylysine modification is found at Lys36. Cys39 bears the S-(2-succinyl)cysteine mark. The interval 44–105 (AGIPGHPGHN…GFPGTPGRKG (62 aa)) is disordered. A Collagen-like domain is found at 45–110 (GIPGHPGHNG…PGRKGEPGEA (66 aa)). 3 positions are modified to 4-hydroxyproline: Pro47, Pro50, and Pro56. The segment covering 58-73 (RDGRDGTPGEKGEKGD) has biased composition (basic and acidic residues). Lys68, Lys71, and Lys80 each carry 5-hydroxylysine; alternate. 3 O-linked (Gal...) hydroxylysine; alternate glycosylation sites follow: Lys68, Lys71, and Lys80. A 4-hydroxyproline modification is found at Pro94. At Lys104 the chain carries 5-hydroxylysine; alternate. Residue Lys104 is glycosylated (O-linked (Gal...) hydroxylysine; alternate). One can recognise a C1q domain in the interval 111 to 247 (AYVYRSAFSV…TGFLLYHDTN (137 aa)).

As to quaternary structure, homomultimer. Forms trimers, hexamers and 12- to 18-mers. The trimers (low molecular weight complexes / LMW) are assembled via non-covalent interactions of the collagen-like domains in a triple helix and hydrophobic interactions within the globular C1q domain. Several trimers can associate to form disulfide-linked hexamers (middle molecular weight complexes / MMW) and larger complexes (higher molecular weight / HMW). The HMW-complex assembly is also modulated by the degree of lysine hydroxylation and glycosylation. LMW, MMW and HMW complexes bind to HBEGF, MMW and HMW complexes bind to PDGFB, and HMW complex binds to FGF2. Interacts with CTRP9 via the C1q domain (heterotrimeric complex). In terms of processing, HMW complexes are more extensively glycosylated than smaller oligomers. Hydroxylation and glycosylation of the lysine residues within the collagen-like domain of adiponectin seem to be critically involved in regulating the formation and/or secretion of HMW complexes and consequently contribute to the insulin-sensitizing activity of adiponectin in hepatocytes. O-glycosylated. Not N-glycosylated O-linked glycans on hydroxylysine residues consist of Glc-Gal disaccharides bound to the oxygen atom of post-translationally added hydroxyl groups. O-linked glycosylation in the N-terminal is disialylated with the structure Neu5Acalpha2-&gt;8Neu5Acalpha2-&gt;3Gal. Sialylated by alpha 2,8-sialyltransferase III. Post-translationally, succination of Cys-39 by the Krebs cycle intermediate fumarate, which leads to S-(2-succinyl)cysteine residues, inhibits polymerization and secretion of adiponectin. Adiponectin is a major target for succination in both adipocytes and adipose tissue of diabetic mice. It was proposed that succination of proteins is a biomarker of mitochondrial stress and accumulation of Krebs cycle intermediates in adipose tissue in diabetes and that succination of adiponectin may contribute to the decrease in plasma adiponectin in diabetes. Synthesized exclusively by adipocytes and secreted into plasma.

It localises to the secreted. Polymerization and secretion of adiponectin is inhibited by succination of cysteine residues by the Krebs cycle intermediate fumarate, which leads to S-(2-succinyl)cysteine residues. Its function is as follows. Important adipokine involved in the control of fat metabolism and insulin sensitivity, with direct anti-diabetic, anti-atherogenic and anti-inflammatory activities. Stimulates AMPK phosphorylation and activation in the liver and the skeletal muscle, enhancing glucose utilization and fatty-acid combustion. Antagonizes TNF-alpha by negatively regulating its expression in various tissues such as liver and macrophages, and also by counteracting its effects. Inhibits endothelial NF-kappa-B signaling through a cAMP-dependent pathway. May play a role in cell growth, angiogenesis and tissue remodeling by binding and sequestering various growth factors with distinct binding affinities, depending on the type of complex, LMW, MMW or HMW. The sequence is that of Adiponectin (Adipoq) from Mus musculus (Mouse).